Here is a 554-residue protein sequence, read N- to C-terminus: Chaperonin GroEL (554 aa).

Residues 29 to 32 (TLGP), Lys-50, 86 to 90 (DGTTT), Gly-418, and Asp-499 each bind ATP. The tract at residues 528-554 (HEEDNNTNRSGGGVGGGHHGGMGGMDF) is disordered. The span at 537–554 (SGGGVGGGHHGGMGGMDF) shows a compositional bias: gly residues.

It belongs to the chaperonin (HSP60) family. As to quaternary structure, forms a cylinder of 14 subunits composed of two heptameric rings stacked back-to-back. Interacts with the co-chaperonin GroES.

The protein localises to the cytoplasm. The catalysed reaction is ATP + H2O + a folded polypeptide = ADP + phosphate + an unfolded polypeptide.. In terms of biological role, together with its co-chaperonin GroES, plays an essential role in assisting protein folding. The GroEL-GroES system forms a nano-cage that allows encapsulation of the non-native substrate proteins and provides a physical environment optimized to promote and accelerate protein folding. This chain is Chaperonin GroEL, found in Orientia tsutsugamushi (strain Boryong) (Rickettsia tsutsugamushi).